A 329-amino-acid polypeptide reads, in one-letter code: D-alanine--D-alanine ligase (329 aa).

In terms of domain architecture, ATP-grasp spans 120–326 (KLWLSAIGIP…FADYLEQILR (207 aa)). 150 to 205 (ALAKWGKVFIKAASQGSSVGCYSASNEADLVKGIADAFGYSEQVLIEKAVKPRELE) provides a ligand contact to ATP. Mg(2+)-binding residues include D280, E293, and N295.

The protein belongs to the D-alanine--D-alanine ligase family. Requires Mg(2+) as cofactor. Mn(2+) serves as cofactor.

It localises to the cytoplasm. It carries out the reaction 2 D-alanine + ATP = D-alanyl-D-alanine + ADP + phosphate + H(+). It participates in cell wall biogenesis; peptidoglycan biosynthesis. Functionally, cell wall formation. This chain is D-alanine--D-alanine ligase, found in Aeromonas hydrophila subsp. hydrophila (strain ATCC 7966 / DSM 30187 / BCRC 13018 / CCUG 14551 / JCM 1027 / KCTC 2358 / NCIMB 9240 / NCTC 8049).